A 309-amino-acid polypeptide reads, in one-letter code: Elongation factor Ts (309 aa).

The interval 82–85 (TDFV) is involved in Mg(2+) ion dislocation from EF-Tu.

It belongs to the EF-Ts family.

Its subcellular location is the cytoplasm. Its function is as follows. Associates with the EF-Tu.GDP complex and induces the exchange of GDP to GTP. It remains bound to the aminoacyl-tRNA.EF-Tu.GTP complex up to the GTP hydrolysis stage on the ribosome. The protein is Elongation factor Ts (tsf) of Rickettsia prowazekii (strain Madrid E).